Reading from the N-terminus, the 1323-residue chain is Inositol hexakisphosphate and diphosphoinositol-pentakisphosphate kinase (1323 aa).

26–27 (RK) lines the substrate pocket. Residues Arg109, Lys162, His169, Arg188, 212–215 (EEFI), and 221–223 (DVK) each bind ATP. Position 188-189 (188-189 (RK)) interacts with substrate. Substrate is bound by residues Lys223 and Arg237. ATP contacts are provided by residues Asp284 and 296–298 (DVN). Residue 301–304 (SFVK) participates in substrate binding. Residues 355 to 426 (TTPSGKLAEL…VLELARALVI (72 aa)) form a polyphosphoinositide-binding domain region. Polar residues-rich tracts occupy residues 933 to 947 (FNLS…SSRS) and 977 to 992 (VTPT…NDDL). Disordered regions lie at residues 933–1022 (FNLS…SEDD), 1043–1107 (AMAD…GGGK), and 1134–1155 (IVIP…ASER). The segment covering 993–1006 (SISSNAESTAAEST) has biased composition (low complexity). The segment covering 1062–1074 (KSMEEGDKPHGEW) has biased composition (basic and acidic residues). A compositionally biased stretch (low complexity) spans 1090–1101 (SNEMESNNESME).

It belongs to the histidine acid phosphatase family. VIP1 subfamily.

The protein localises to the cytoplasm. It is found in the cytosol. The enzyme catalyses 1D-myo-inositol hexakisphosphate + ATP = 1-diphospho-1D-myo-inositol 2,3,4,5,6-pentakisphosphate + ADP. It carries out the reaction 5-diphospho-1D-myo-inositol 1,2,3,4,6-pentakisphosphate + ATP + H(+) = 1,5-bis(diphospho)-1D-myo-inositol 2,3,4,6-tetrakisphosphate + ADP. Bifunctional inositol kinase that acts in concert with the IP6K kinases to synthesize the diphosphate group-containing inositol pyrophosphates diphosphoinositol pentakisphosphate, PP-InsP5, and bis-diphosphoinositol tetrakisphosphate, (PP)2-InsP4. PP-InsP5 and (PP)2-InsP4, also respectively called InsP7 and InsP8, may regulate a variety of cellular processes, including apoptosis, vesicle trafficking, cytoskeletal dynamics, and exocytosis. Phosphorylates inositol hexakisphosphate (InsP6) at position 1 to produce PP-InsP5 which is in turn phosphorylated by IP6Ks to produce (PP)2-InsP4. Alternatively, phosphorylates PP-InsP5 at position 1, produced by IP6Ks from InsP6, to produce (PP)2-InsP4. The polypeptide is Inositol hexakisphosphate and diphosphoinositol-pentakisphosphate kinase (Caenorhabditis elegans).